Here is a 308-residue protein sequence, read N- to C-terminus: Ribosomal RNA large subunit methyltransferase F (308 aa).

The protein belongs to the methyltransferase superfamily. METTL16/RlmF family.

It is found in the cytoplasm. The catalysed reaction is adenosine(1618) in 23S rRNA + S-adenosyl-L-methionine = N(6)-methyladenosine(1618) in 23S rRNA + S-adenosyl-L-homocysteine + H(+). In terms of biological role, specifically methylates the adenine in position 1618 of 23S rRNA. The protein is Ribosomal RNA large subunit methyltransferase F of Shigella boydii serotype 18 (strain CDC 3083-94 / BS512).